The chain runs to 501 residues: Glucan endo-1,3-beta-glucosidase 3 (501 aa).

Positions 1-18 (MAALLLLFLFLFASSALS) are cleaved as a signal peptide. N-linked (GlcNAc...) asparagine glycans are attached at residues N88 and N107. E116 (proton donor) is an active-site residue. N-linked (GlcNAc...) asparagine glycosylation is found at N171 and N253. Catalysis depends on E263, which acts as the Nucleophile. N-linked (GlcNAc...) asparagine glycosylation is found at N295, N353, and N357. C361 and C424 are oxidised to a cystine. Residues N451, N456, N457, and N466 are each glycosylated (N-linked (GlcNAc...) asparagine). Residue S470 is the site of GPI-anchor amidated serine attachment. Positions 471-501 (GCIPKYYHHPHASFGDLTLLSLLLIIALVFL) are cleaved as a propeptide — removed in mature form.

It belongs to the glycosyl hydrolase 17 family. In terms of processing, contains two additional disulfide bonds.

It is found in the cell membrane. The catalysed reaction is Hydrolysis of (1-&gt;3)-beta-D-glucosidic linkages in (1-&gt;3)-beta-D-glucans.. The protein is Glucan endo-1,3-beta-glucosidase 3 of Arabidopsis thaliana (Mouse-ear cress).